The following is a 256-amino-acid chain: Imidazole glycerol phosphate synthase subunit HisF (256 aa).

Residues Asp-11 and Asp-130 contribute to the active site.

The protein belongs to the HisA/HisF family. In terms of assembly, heterodimer of HisH and HisF.

It localises to the cytoplasm. It carries out the reaction 5-[(5-phospho-1-deoxy-D-ribulos-1-ylimino)methylamino]-1-(5-phospho-beta-D-ribosyl)imidazole-4-carboxamide + L-glutamine = D-erythro-1-(imidazol-4-yl)glycerol 3-phosphate + 5-amino-1-(5-phospho-beta-D-ribosyl)imidazole-4-carboxamide + L-glutamate + H(+). It participates in amino-acid biosynthesis; L-histidine biosynthesis; L-histidine from 5-phospho-alpha-D-ribose 1-diphosphate: step 5/9. Functionally, IGPS catalyzes the conversion of PRFAR and glutamine to IGP, AICAR and glutamate. The HisF subunit catalyzes the cyclization activity that produces IGP and AICAR from PRFAR using the ammonia provided by the HisH subunit. The polypeptide is Imidazole glycerol phosphate synthase subunit HisF (Prochlorococcus marinus (strain NATL1A)).